Here is a 267-residue protein sequence, read N- to C-terminus: Tryptophan synthase alpha chain (267 aa).

Catalysis depends on proton acceptor residues Glu39 and Asp50.

Belongs to the TrpA family. In terms of assembly, tetramer of two alpha and two beta chains.

The enzyme catalyses (1S,2R)-1-C-(indol-3-yl)glycerol 3-phosphate + L-serine = D-glyceraldehyde 3-phosphate + L-tryptophan + H2O. It participates in amino-acid biosynthesis; L-tryptophan biosynthesis; L-tryptophan from chorismate: step 5/5. Functionally, the alpha subunit is responsible for the aldol cleavage of indoleglycerol phosphate to indole and glyceraldehyde 3-phosphate. This is Tryptophan synthase alpha chain from Helicobacter hepaticus (strain ATCC 51449 / 3B1).